The following is a 473-amino-acid chain: Ribulose bisphosphate carboxylase large chain (473 aa).

Substrate-binding residues include Asn116 and Thr166. Lys168 (proton acceptor) is an active-site residue. Lys170 is a substrate binding site. Lys194, Asp196, and Glu197 together coordinate Mg(2+). Lys194 carries the post-translational modification N6-carboxylysine. His287 acts as the Proton acceptor in catalysis. Substrate is bound by residues Arg288, His320, and Ser372.

Belongs to the RuBisCO large chain family. Type I subfamily. Heterohexadecamer of 8 large chains and 8 small chains. The cofactor is Mg(2+).

The enzyme catalyses 2 (2R)-3-phosphoglycerate + 2 H(+) = D-ribulose 1,5-bisphosphate + CO2 + H2O. It carries out the reaction D-ribulose 1,5-bisphosphate + O2 = 2-phosphoglycolate + (2R)-3-phosphoglycerate + 2 H(+). Functionally, ruBisCO catalyzes two reactions: the carboxylation of D-ribulose 1,5-bisphosphate, the primary event in carbon dioxide fixation, as well as the oxidative fragmentation of the pentose substrate. Both reactions occur simultaneously and in competition at the same active site. This chain is Ribulose bisphosphate carboxylase large chain, found in Methylococcus capsulatus (strain ATCC 33009 / NCIMB 11132 / Bath).